We begin with the raw amino-acid sequence, 171 residues long: Ribosome maturation factor RimM (171 aa).

Positions 96–168 (EDGFYDHELE…TATITPPEGL (73 aa)) constitute a PRC barrel domain.

This sequence belongs to the RimM family. In terms of assembly, binds ribosomal protein uS19.

The protein resides in the cytoplasm. In terms of biological role, an accessory protein needed during the final step in the assembly of 30S ribosomal subunit, possibly for assembly of the head region. Essential for efficient processing of 16S rRNA. May be needed both before and after RbfA during the maturation of 16S rRNA. It has affinity for free ribosomal 30S subunits but not for 70S ribosomes. The protein is Ribosome maturation factor RimM of Corynebacterium glutamicum (strain R).